A 925-amino-acid chain; its full sequence is Probable disease resistance protein At1g61310 (925 aa).

Residues 25-69 (GKSYIRTLEKNLRALQREMEDLRATQHEVQNKVAREESRHQQRLE) adopt a coiled-coil conformation. Residues 134–154 (NFDEVSQPPPRSEVEERPTQP) form a disordered region. The 304-residue stretch at 139 to 442 (SQPPPRSEVE…CEGFIGEDQV (304 aa)) folds into the NB-ARC domain. 181-188 (GMGGVGKT) provides a ligand contact to ATP. LRR repeat units lie at residues 525–546 (AVRRMSLMRNEIEEITCESKCS), 547–568 (ELTTLFLQSNQLKNLSGEFIRY), 571–594 (KLVVLDLSDNRDFNELPEQISGLV), 595–617 (SLQYLDLSFTRIEQLPVGLKELK), 618–640 (KLTFLDLAYTARLCSISGISRLL), and 641–663 (SLRVLSLLGSKVHGDASVLKELQ).

Belongs to the disease resistance NB-LRR family.

Probable disease resistance protein. This chain is Probable disease resistance protein At1g61310, found in Arabidopsis thaliana (Mouse-ear cress).